The sequence spans 717 residues: SAGA factor-like TAF6 (717 aa).

Residues 123-204 (KSYAGFDPRS…VPPMLGAMDS (82 aa)) form a sufficient for interaction with Taf9 region.

Belongs to the TAF6 family. Component of the Spt-Ada-Gcn5 acetyltransferase (SAGA) complex consisting of wda/Taf5L, Saf6, Taf9, Taf10b, Taf12, Ada1, Spt3, Spt7, Spt20, Sf3b3, Sf3b5, Nipped-A/Tra1, a histone acetyltransferase (HAT) module made up of Gcn5, Ada2b (Isoform B), Ada3 and Sgf29, and a deubiquitinase (DUB) module made up of not/nonstop, Sgf11 and e(y)2 tethered to SAGA by Atxn7; not essential for SAGA complex assembly, histone-modifying activity or chromosomal recruitment. Interacts (via N-terminal histone-fold domain) with Taf9 (via N-terminal histone-fold domain); the interaction is probably direct. Probably forms a histone-like heterooctamer structure with Taf9, Taf12 and Taf10b.

The protein localises to the nucleus. It localises to the chromosome. Component of the transcription regulatory complex SAGA, a multiprotein complex that activates transcription by remodeling chromatin and mediating histone acetylation and deubiquitination. The SAGA complex predominantly acetylates histone H3. Involved in SAGA complex coactivator function but not essential for SAGA complex assembly, histone-modifying activity or chromosomal recruitment. Required for oogenesis; involved in transcriptional activation. This chain is SAGA factor-like TAF6, found in Drosophila melanogaster (Fruit fly).